Consider the following 225-residue polypeptide: MDDLETLDFRELERELANALAADQKYSRENDAKFRAIHQKVASYEEFRDIVLASNLKPLERKDKVGGESKQPWNPSFNTTNCTQKSEDVMLKKSLSDPTNAFEFARDWRRLGNVEKYDFLLQLGAEKLSQLFHAEVCSGLLGEFLLVLSESFQAIHVEKVLKILQTLAETKRFDLNLIFISRSEVESSQKLFGKLQTCVGAMKDEKRGLGDENLRKLMACYKISC.

Residues 8-32 (DFRELERELANALAADQKYSRENDA) are a coiled coil.

It belongs to the DNAAF19/PR46b family. As to quaternary structure, homodimer.

It is found in the cytoplasm. The protein localises to the cell projection. It localises to the cilium. Its subcellular location is the flagellum. Its function is as follows. Dynein-attachment factor required for cilia motility. The protein is Dynein axonemal assembly factor 19 (dnaaf19) of Xenopus tropicalis (Western clawed frog).